A 133-amino-acid polypeptide reads, in one-letter code: ATP synthase epsilon chain, chloroplastic (133 aa).

The protein belongs to the ATPase epsilon chain family. As to quaternary structure, F-type ATPases have 2 components, CF(1) - the catalytic core - and CF(0) - the membrane proton channel. CF(1) has five subunits: alpha(3), beta(3), gamma(1), delta(1), epsilon(1). CF(0) has three main subunits: a, b and c.

It is found in the plastid. The protein localises to the chloroplast thylakoid membrane. In terms of biological role, produces ATP from ADP in the presence of a proton gradient across the membrane. In Trieres chinensis (Marine centric diatom), this protein is ATP synthase epsilon chain, chloroplastic.